The chain runs to 396 residues: MGVLKTCVLRRSACAAACFWRRTVIPKPPFRGISTTSARSTVMPAWVIDKYGKNEVLRFTQNMMLPIIHYPNEVIIKVHAASVNPIDVNMRSGYGATALNMKRDPLHMKTKGEEFPLTLGRDVSGVVMECGLDVKYFQPGDEVWAAVPPWKQGTLSEFVVVSGNEVSHKPKSLTHTQAASLPYVALTAWSAINKVGGLSDKNCKGKRALILGASGGVGTFAIQVMKAWGAHVTAVCSKDASELVRKLGADEVIDYTLGSVEEQLKSLKLFDFILDNVGGSTETWALNFLKKWSGATYVTLVTPFLLNMDRLGVADGMLQTGVTVGTKALKHLWQGVHYRWAFFMASGPYLDEIAELVDAGKIRPVIERTFPFSEVPEAFLKVERGHARGKTVVNVV.

Residues 1-40 (MGVLKTCVLRRSACAAACFWRRTVIPKPPFRGISTTSARS) constitute a mitochondrion transit peptide. In terms of domain architecture, Enoyl reductase (ER) spans 52-393 (GKNEVLRFTQ…RGHARGKTVV (342 aa)). Ser-214, Gly-216, Val-217, Ser-237, Tyr-255, Asn-276, Leu-300, Ala-341, Phe-343, His-386, Ala-387, and Arg-388 together coordinate NADPH.

The protein belongs to the zinc-containing alcohol dehydrogenase family. Quinone oxidoreductase subfamily. Interacts with RTN4, UQCRC1 and UQCRC2. Widely expressed in mitochondria-enriched tissues. Found in heart, kidney, liver, brain and spinal cord.

Its subcellular location is the mitochondrion matrix. The protein resides in the mitochondrion outer membrane. The catalysed reaction is a 3-demethylubiquinone + NADH + 2 H(+) = a 3-demethylubiquinol + NAD(+). The enzyme catalyses a 3-demethylubiquinone + NADPH + 2 H(+) = a 3-demethylubiquinol + NADP(+). It carries out the reaction 3-demethylubiquinone-10 + NADH + 2 H(+) = 3-demethylubiquinol-10 + NAD(+). It catalyses the reaction 3-demethylubiquinone-10 + NADPH + 2 H(+) = 3-demethylubiquinol-10 + NADP(+). It participates in cofactor biosynthesis; ubiquinone biosynthesis. In terms of biological role, NAD(P)H oxidoreductase involved in the ubiquinone biosynthetic pathway. Required for the O-methyltransferase activity of COQ3. Able to catalyze the oxidoreduction of 3-demethylubiquinone into 3-demethylubiquinol in vitro. However, it is unclear if 3-demethylubiquinone constitutes a substrate in vivo. May also play a role in the regulation of retinal ganglion cell (RGC) neurite outgrowth, and hence in the development of the inner retina and optic nerve. Appears to be a potent inhibitor of regeneration following spinal cord injury. The chain is NAD(P)H oxidoreductase RTN4IP1, mitochondrial from Mus musculus (Mouse).